The following is an 839-amino-acid chain: Phenylalanine--tRNA ligase beta subunit (839 aa).

The tRNA-binding domain occupies 42-166; that stretch reads GELTGPIVIG…PPSVEGHQLV (125 aa). Positions 421–496 constitute a B5 domain; it reads PEMPRQTINA…RKIGFDRIKA (76 aa). Positions 474, 480, 483, and 484 each coordinate Mg(2+). Residues 745–838 enclose the FDX-ACB domain; sequence SSFPVAKEDV…AEETCGAQLR (94 aa).

Belongs to the phenylalanyl-tRNA synthetase beta subunit family. Type 1 subfamily. In terms of assembly, tetramer of two alpha and two beta subunits. Mg(2+) serves as cofactor.

The protein localises to the cytoplasm. The enzyme catalyses tRNA(Phe) + L-phenylalanine + ATP = L-phenylalanyl-tRNA(Phe) + AMP + diphosphate + H(+). This chain is Phenylalanine--tRNA ligase beta subunit, found in Cutibacterium acnes (strain DSM 16379 / KPA171202) (Propionibacterium acnes).